The following is a 196-amino-acid chain: Peptide deformylase (196 aa).

Fe cation-binding residues include cysteine 97 and histidine 139. The active site involves glutamate 140. Histidine 143 provides a ligand contact to Fe cation. Basic and acidic residues predominate over residues 171-187; the sequence is LDAQEPKRAPHSPHTDA. Residues 171–196 are disordered; that stretch reads LDAQEPKRAPHSPHTDAQKPGAASDL.

The protein belongs to the polypeptide deformylase family. Fe(2+) serves as cofactor.

It catalyses the reaction N-terminal N-formyl-L-methionyl-[peptide] + H2O = N-terminal L-methionyl-[peptide] + formate. Functionally, removes the formyl group from the N-terminal Met of newly synthesized proteins. Requires at least a dipeptide for an efficient rate of reaction. N-terminal L-methionine is a prerequisite for activity but the enzyme has broad specificity at other positions. The sequence is that of Peptide deformylase from Methylocella silvestris (strain DSM 15510 / CIP 108128 / LMG 27833 / NCIMB 13906 / BL2).